The chain runs to 878 residues: Probable outer membrane protein PmpI (878 aa).

Residues 1 to 24 (MRPDHMNFCCLCAAILSSTAVLFG) form the signal peptide. Over residues 360–371 (SSKESPLPSSLQ) the composition is skewed to low complexity. The interval 360 to 381 (SSKESPLPSSLQASVTSPTPAT) is disordered. The span at 372-381 (ASVTSPTPAT) shows a compositional bias: polar residues. The Autotransporter domain occupies 602–878 (GGAYLFGTWG…SLDLGTTYRF (277 aa)).

The protein belongs to the PMP outer membrane protein family.

Its subcellular location is the secreted. It is found in the cell wall. The protein localises to the cell outer membrane. This Chlamydia trachomatis serovar D (strain ATCC VR-885 / DSM 19411 / UW-3/Cx) protein is Probable outer membrane protein PmpI (pmpI).